Reading from the N-terminus, the 436-residue chain is MTTEPLEDPEANSNFVHGLPEASLGNKADENSEDLPGPSEGLDPLPDEVPPEDIVEARAEEDVDQASEANIIATEQDEEQASMQIATSMGQNKDRASMQTDTSTGRDAEPATSMTTSTSGVKEEIPGTPNPSQENLEELTSLLPQDPGILQMFVGFQNPVWDRLAENNRTSRSRTVSPSDSQTQEKTSGKSTVSEGQLEIASNADVPSVLPEDVQTSAGATDPPPSDTTGPEPEPTKSADQEAEDFKALNPESKVRSPKSTSEDLAADSGTPQAPPSPNSPADSPPPSPDSYQVSLGRSRLDPSLYGPEVENDYMRSMTSLLCGGEGSISSLTDILVWSDTATRMGVAMGILASGRSSPADRLQDEGPRLRTVASLFRSARSAFSSGVMAGTSSVLRSVTHLLESVERHTMEGIRSTMRYLNHFTLRWARTGSNSD.

2 stretches are compositionally biased toward acidic residues: residues 1–10 and 45–54; these read MTTEPLEDPE and LPDEVPPEDI. Disordered regions lie at residues 1–142 and 165–307; these read MTTE…LTSL and AENN…SLYG. Composition is skewed to polar residues over residues 81 to 103 and 167 to 195; these read ASMQ…TDTS and NNRT…TVSE. Over residues 234–247 the composition is skewed to basic and acidic residues; that stretch reads EPTKSADQEAEDFK. Over residues 273–289 the composition is skewed to pro residues; it reads QAPPSPNSPADSPPPSP. A Phosphoserine modification is found at S375.

It localises to the cytoplasm. This Rattus norvegicus (Rat) protein is Testis-expressed protein 44 (Tex44).